Here is a 503-residue protein sequence, read N- to C-terminus: ATP synthase subunit alpha (503 aa).

169–176 (GDRGTGKT) is a binding site for ATP.

The protein belongs to the ATPase alpha/beta chains family. F-type ATPases have 2 components, CF(1) - the catalytic core - and CF(0) - the membrane proton channel. CF(1) has five subunits: alpha(3), beta(3), gamma(1), delta(1), epsilon(1). CF(0) has three main subunits: a(1), b(2) and c(9-12). The alpha and beta chains form an alternating ring which encloses part of the gamma chain. CF(1) is attached to CF(0) by a central stalk formed by the gamma and epsilon chains, while a peripheral stalk is formed by the delta and b chains.

It localises to the cell inner membrane. It carries out the reaction ATP + H2O + 4 H(+)(in) = ADP + phosphate + 5 H(+)(out). Produces ATP from ADP in the presence of a proton gradient across the membrane. The alpha chain is a regulatory subunit. The polypeptide is ATP synthase subunit alpha (Leptospira borgpetersenii serovar Hardjo-bovis (strain L550)).